The sequence spans 214 residues: Auxin-binding protein ABP20 (214 aa).

Positions 1–23 are cleaved as a signal peptide; that stretch reads MPQATMIFPILFTFFLLLSSSNA. An intrachain disulfide couples Cys29 to Cys44. A Cupin type-1 domain is found at 58–204; sequence SGLGIAGNTS…TTFLDAAQIK (147 aa). A glycan (N-linked (GlcNAc...) asparagine) is linked at Asn65. Residues His106, His108, Glu113, and His152 each coordinate Mn(2+).

It belongs to the germin family. As to quaternary structure, interacts with ABP19.

It is found in the secreted. The protein localises to the extracellular space. The protein resides in the apoplast. Its subcellular location is the cell wall. Probable receptor for the plant growth-promoting hormone auxin. The sequence is that of Auxin-binding protein ABP20 (ABP20) from Prunus persica (Peach).